A 468-amino-acid chain; its full sequence is Cysteine--tRNA ligase (468 aa).

Cys-27 provides a ligand contact to Zn(2+). The 'HIGH' region signature appears at 29–39 (PTVYDDAHLGH). Cys-204, His-234, and Glu-238 together coordinate Zn(2+). A 'KMSKS' region motif is present at residues 266–270 (KMSKS). Residue Lys-269 participates in ATP binding.

This sequence belongs to the class-I aminoacyl-tRNA synthetase family. Monomer. Zn(2+) is required as a cofactor.

It localises to the cytoplasm. It carries out the reaction tRNA(Cys) + L-cysteine + ATP = L-cysteinyl-tRNA(Cys) + AMP + diphosphate. The protein is Cysteine--tRNA ligase of Campylobacter hominis (strain ATCC BAA-381 / DSM 21671 / CCUG 45161 / LMG 19568 / NCTC 13146 / CH001A).